The sequence spans 162 residues: NADH-quinone oxidoreductase subunit I 2 (162 aa).

4Fe-4S ferredoxin-type domains lie at 52 to 82 and 93 to 122; these read LRRY…IEAG and VRYD…EGPN. Cysteine 62, cysteine 65, cysteine 68, cysteine 72, cysteine 102, cysteine 105, cysteine 108, and cysteine 112 together coordinate [4Fe-4S] cluster.

This sequence belongs to the complex I 23 kDa subunit family. NDH-1 is composed of 14 different subunits. Subunits NuoA, H, J, K, L, M, N constitute the membrane sector of the complex. [4Fe-4S] cluster serves as cofactor.

It localises to the cell inner membrane. The enzyme catalyses a quinone + NADH + 5 H(+)(in) = a quinol + NAD(+) + 4 H(+)(out). Its function is as follows. NDH-1 shuttles electrons from NADH, via FMN and iron-sulfur (Fe-S) centers, to quinones in the respiratory chain. The immediate electron acceptor for the enzyme in this species is believed to be ubiquinone. Couples the redox reaction to proton translocation (for every two electrons transferred, four hydrogen ions are translocated across the cytoplasmic membrane), and thus conserves the redox energy in a proton gradient. The polypeptide is NADH-quinone oxidoreductase subunit I 2 (Rhodopseudomonas palustris (strain HaA2)).